Consider the following 454-residue polypeptide: Putative tyrosine kinase 36 (454 aa).

ATP-binding positions include 80–88 (LGSGSFGKV) and Lys-98. The Proton acceptor role is filled by Asp-192.

Belongs to the protein kinase superfamily. Tyr protein kinase family.

It carries out the reaction L-tyrosyl-[protein] + ATP = O-phospho-L-tyrosyl-[protein] + ADP + H(+). In Alcelaphine herpesvirus 1 (strain C500) (AlHV-1), this protein is Putative tyrosine kinase 36 (36).